We begin with the raw amino-acid sequence, 127 residues long: Tyrosine-protein phosphatase 2 (127 aa).

Residues 1-127 form the Tyrosine-protein phosphatase domain; it reads QGSKVIVMVT…PRDCEAPILV (127 aa). Positions 63–81 are enriched in acidic residues; that stretch reads VYDNDDGTEQNDEQTEEEP. The disordered stretch occupies residues 63–82; it reads VYDNDDGTEQNDEQTEEEPE.

The protein belongs to the protein-tyrosine phosphatase family.

It catalyses the reaction O-phospho-L-tyrosyl-[protein] + H2O = L-tyrosyl-[protein] + phosphate. The protein is Tyrosine-protein phosphatase 2 (STY-2) of Styela plicata (Wrinkled sea squirt).